Here is a 135-residue protein sequence, read N- to C-terminus: Large ribosomal subunit protein eL32 (135 aa).

Belongs to the eukaryotic ribosomal protein eL32 family.

The chain is Large ribosomal subunit protein eL32 (rpl32e) from Methanococcus vannielii.